The following is a 260-amino-acid chain: Putative imidazole glycerol phosphate synthase subunit hisF3 (260 aa).

Aspartate 135 is a catalytic residue.

This sequence belongs to the HisA/HisF family. As to quaternary structure, heterodimer of HisH and HisF.

The protein localises to the cytoplasm. The catalysed reaction is 5-[(5-phospho-1-deoxy-D-ribulos-1-ylimino)methylamino]-1-(5-phospho-beta-D-ribosyl)imidazole-4-carboxamide + L-glutamine = D-erythro-1-(imidazol-4-yl)glycerol 3-phosphate + 5-amino-1-(5-phospho-beta-D-ribosyl)imidazole-4-carboxamide + L-glutamate + H(+). Its pathway is amino-acid biosynthesis; L-histidine biosynthesis; L-histidine from 5-phospho-alpha-D-ribose 1-diphosphate: step 5/9. Functionally, IGPS catalyzes the conversion of PRFAR and glutamine to IGP, AICAR and glutamate. The HisF subunit catalyzes the cyclization activity that produces IGP and AICAR from PRFAR using the ammonia provided by the HisH subunit. This Vibrio vulnificus (strain YJ016) protein is Putative imidazole glycerol phosphate synthase subunit hisF3 (hisF3).